We begin with the raw amino-acid sequence, 431 residues long: Mannan endo-1,4-beta-mannosidase 7 (431 aa).

The signal sequence occupies residues 1-25 (MKLLALFPFLAIVIQLSCWELGTDA). Substrate contacts are provided by W87 and N202. The active-site Proton donor is the E203. Y280 contributes to the substrate binding site. Catalysis depends on E320, which acts as the Nucleophile. A substrate-binding site is contributed by W362.

Belongs to the glycosyl hydrolase 5 (cellulase A) family. As to expression, expressed in stems, flowers, siliques and seeds. Expressed in root vasculature, leaf hydathodes, anther filaments, stigma, sepal vasculature, at the base and apical parts of siliques, and replum. Expressed in the micropylar endosperm and radicle tip in early germinating seeds.

Its subcellular location is the secreted. The enzyme catalyses Random hydrolysis of (1-&gt;4)-beta-D-mannosidic linkages in mannans, galactomannans and glucomannans.. In terms of biological role, required for both, loosening of the micropylar endosperm, and rupture of the seed coat in germinating seeds. May participate in the hydrolysis of the mannans in the cell wall of germinating seeds. The polypeptide is Mannan endo-1,4-beta-mannosidase 7 (MAN7) (Arabidopsis thaliana (Mouse-ear cress)).